A 684-amino-acid chain; its full sequence is Glycine--tRNA ligase beta subunit (684 aa).

This sequence belongs to the class-II aminoacyl-tRNA synthetase family. Tetramer of two alpha and two beta subunits.

The protein resides in the cytoplasm. The enzyme catalyses tRNA(Gly) + glycine + ATP = glycyl-tRNA(Gly) + AMP + diphosphate. The chain is Glycine--tRNA ligase beta subunit from Pseudomonas fluorescens (strain ATCC BAA-477 / NRRL B-23932 / Pf-5).